An 85-amino-acid polypeptide reads, in one-letter code: Beta-toxin BmKAs1 (85 aa).

Residues Met-1–Ala-19 form the signal peptide. The 63-residue stretch at Asp-20–Asn-82 folds into the LCN-type CS-alpha/beta domain. Disulfide bonds link Cys-31-Cys-81, Cys-35-Cys-56, Cys-42-Cys-63, and Cys-46-Cys-65.

It belongs to the long (4 C-C) scorpion toxin superfamily. Sodium channel inhibitor family. Post-translationally, a possible sulfoxide Met-85 on BmP09 could explain the difference of function between BmK AS-1 and BmP09. In terms of tissue distribution, expressed by the venom gland.

It localises to the secreted. Its function is as follows. Beta toxins bind voltage-independently at site-4 of sodium channels (Nav) and shift the voltage of activation toward more negative potentials thereby affecting sodium channel activation and promoting spontaneous and repetitive firing. BmKAs1 also significantly stimulates the binding of [3H]-ryanodine to ryanodine receptors on the sarcoplasmic reticulum of the skeletal muscle. It also displays antinociceptive effect in rat models. Toxin BmP09 (which may be post-translationally modified) specifically and reversibly blocks large conductance calcium-dependent and voltage-dependent potassium channels (BK) but has no effect on sodium channels. The polypeptide is Beta-toxin BmKAs1 (Olivierus martensii (Manchurian scorpion)).